The chain runs to 501 residues: Phenylalanine--tRNA ligase alpha subunit (501 aa).

L-phenylalanine is bound by residues T340 and F423. A Mg(2+)-binding site is contributed by E425. F448 contributes to the L-phenylalanine binding site.

The protein belongs to the class-II aminoacyl-tRNA synthetase family. Phe-tRNA synthetase alpha subunit type 2 subfamily. Tetramer of two alpha and two beta subunits. The cofactor is Mg(2+).

The protein resides in the cytoplasm. The enzyme catalyses tRNA(Phe) + L-phenylalanine + ATP = L-phenylalanyl-tRNA(Phe) + AMP + diphosphate + H(+). This Methanococcus maripaludis (strain C5 / ATCC BAA-1333) protein is Phenylalanine--tRNA ligase alpha subunit.